We begin with the raw amino-acid sequence, 101 residues long: DET1- and DDB1-associated protein 1 (101 aa).

Positions 67-101 are disordered; that stretch reads NAAKKRDQDQLEIGETSAPPRKIARTDSQEMNEDT.

It belongs to the DDA1 family. As to quaternary structure, component of numerous DCX (DDB1-CUL4-X-box) E3 ubiquitin-protein ligase complexes which consist of a core of DDB1, cullin-4 (CUL4A or CUL4B), DDA1 and RBX1.

It functions in the pathway protein modification; protein ubiquitination. Functionally, functions as a component of numerous distinct DCX (DDB1-CUL4-X-box) E3 ubiquitin-protein ligase complexes which mediate the ubiquitination and subsequent proteasomal degradation of target proteins. In the DCX complexes, acts as a scaffolding subunit required to stabilize the complex. The polypeptide is DET1- and DDB1-associated protein 1 (Xenopus laevis (African clawed frog)).